The sequence spans 100 residues: UPF0213 protein YhbQ (100 aa).

Residues 2–77 enclose the GIY-YIG domain; the sequence is TPWFLYLIRT…KQLTKRQKER (76 aa).

Belongs to the UPF0213 family.

This Escherichia coli O157:H7 protein is UPF0213 protein YhbQ.